The primary structure comprises 118 residues: Large ribosomal subunit protein bL20 (118 aa).

Belongs to the bacterial ribosomal protein bL20 family.

Its function is as follows. Binds directly to 23S ribosomal RNA and is necessary for the in vitro assembly process of the 50S ribosomal subunit. It is not involved in the protein synthesizing functions of that subunit. This is Large ribosomal subunit protein bL20 from Sulfurimonas denitrificans (strain ATCC 33889 / DSM 1251) (Thiomicrospira denitrificans (strain ATCC 33889 / DSM 1251)).